Here is a 425-residue protein sequence, read N- to C-terminus: Serine--tRNA ligase 2 (425 aa).

234-236 lines the L-serine pocket; it reads TAE. ATP is bound at residue 265-267; sequence RVE. Glu288 serves as a coordination point for L-serine. 352–355 is an ATP binding site; the sequence is EVSS. Residue Ser388 coordinates L-serine.

This sequence belongs to the class-II aminoacyl-tRNA synthetase family. Type-1 seryl-tRNA synthetase subfamily. In terms of assembly, homodimer. The tRNA molecule binds across the dimer.

The protein localises to the cytoplasm. The catalysed reaction is tRNA(Ser) + L-serine + ATP = L-seryl-tRNA(Ser) + AMP + diphosphate + H(+). The enzyme catalyses tRNA(Sec) + L-serine + ATP = L-seryl-tRNA(Sec) + AMP + diphosphate + H(+). It participates in aminoacyl-tRNA biosynthesis; selenocysteinyl-tRNA(Sec) biosynthesis; L-seryl-tRNA(Sec) from L-serine and tRNA(Sec): step 1/1. Its function is as follows. Catalyzes the attachment of serine to tRNA(Ser). Is also able to aminoacylate tRNA(Sec) with serine, to form the misacylated tRNA L-seryl-tRNA(Sec), which will be further converted into selenocysteinyl-tRNA(Sec). This is Serine--tRNA ligase 2 from Clostridium acetobutylicum (strain ATCC 824 / DSM 792 / JCM 1419 / IAM 19013 / LMG 5710 / NBRC 13948 / NRRL B-527 / VKM B-1787 / 2291 / W).